The sequence spans 631 residues: 1-deoxy-D-xylulose-5-phosphate synthase (631 aa).

The segment at 1 to 21 (MPTTFHEIPRERPLTPLLDSA) is disordered. Thiamine diphosphate-binding positions include histidine 87 and 128–130 (GHS). Mg(2+) is bound at residue aspartate 159. Residues 160-161 (GA), asparagine 188, phenylalanine 295, and glutamate 377 each bind thiamine diphosphate. Mg(2+) is bound at residue asparagine 188.

The protein belongs to the transketolase family. DXPS subfamily. As to quaternary structure, homodimer. It depends on Mg(2+) as a cofactor. Requires thiamine diphosphate as cofactor.

The catalysed reaction is D-glyceraldehyde 3-phosphate + pyruvate + H(+) = 1-deoxy-D-xylulose 5-phosphate + CO2. It functions in the pathway metabolic intermediate biosynthesis; 1-deoxy-D-xylulose 5-phosphate biosynthesis; 1-deoxy-D-xylulose 5-phosphate from D-glyceraldehyde 3-phosphate and pyruvate: step 1/1. In terms of biological role, catalyzes the acyloin condensation reaction between C atoms 2 and 3 of pyruvate and glyceraldehyde 3-phosphate to yield 1-deoxy-D-xylulose-5-phosphate (DXP). This Ectopseudomonas mendocina (strain ymp) (Pseudomonas mendocina) protein is 1-deoxy-D-xylulose-5-phosphate synthase.